The following is a 327-amino-acid chain: Beta-1,4-galactosyltransferase 7 (327 aa).

Residues 1–30 are Cytoplasmic-facing; it reads MLPSRRKAAQLPWEDGRARLLPGGLRRKCS. A helical; Signal-anchor for type II membrane protein membrane pass occupies residues 31 to 51; sequence IFHLFIAFLLLVFFSLLWLQL. Topologically, residues 52 to 327 are lumenal; sequence SCSGDMAQVT…KTATPWCIFG (276 aa). A disordered region spans residues 61 to 88; it reads TRGQGQETSGPPRACPPEPPPEHWEEDE. UDP-alpha-D-galactose-binding positions include 100–104 and 139–141; these read PFRER and FNR. An N-linked (GlcNAc...) asparagine glycan is attached at Asn154. UDP-alpha-D-galactose-binding positions include 164-165, Tyr194, and Trp224; that span reads VD. Asp165 is a binding site for Mn(2+). An N-acetyl-D-glucosamine-binding site is contributed by 226-229; it reads REDD. His257 contributes to the Mn(2+) binding site. UDP-alpha-D-galactose contacts are provided by residues 257–259 and Arg266; that span reads HLH.

This sequence belongs to the glycosyltransferase 7 family. The cofactor is Mn(2+).

Its subcellular location is the golgi apparatus. The protein localises to the golgi stack membrane. The catalysed reaction is 3-O-(beta-D-xylosyl)-L-seryl-[protein] + UDP-alpha-D-galactose = 3-O-(beta-D-galactosyl-(1-&gt;4)-beta-D-xylosyl)-L-seryl-[protein] + UDP + H(+). Its pathway is protein modification; protein glycosylation. In terms of biological role, required for the biosynthesis of the tetrasaccharide linkage region of proteoglycans, especially for small proteoglycans in skin fibroblasts. In Mus musculus (Mouse), this protein is Beta-1,4-galactosyltransferase 7 (B4galt7).